The primary structure comprises 434 residues: Pyrichalasin H cluster regulator BC2 (434 aa).

Disordered regions lie at residues 297 to 321 (GSSPSGTPESELTSPHKRATTCSPL) and 362 to 383 (HPGHEDHQQQQEEVKQHDRLSH). A compositionally biased stretch (polar residues) spans 298-309 (SSPSGTPESELT). Residues 362 to 380 (HPGHEDHQQQQEEVKQHDR) show a composition bias toward basic and acidic residues.

Its subcellular location is the nucleus. Functionally, transcription factor probably involved in regulation of gene cluster that mediates the biosynthesis of a tyrosine-derived cytochalasan acting as a fungal signal recognized by resistant rice plants and leads to avirulence in Pi33 resistant rice cultivars. The polypeptide is Pyrichalasin H cluster regulator BC2 (Pyricularia oryzae (strain 70-15 / ATCC MYA-4617 / FGSC 8958) (Rice blast fungus)).